A 479-amino-acid polypeptide reads, in one-letter code: Flavonol 3-O-glucosyltransferase UGT71C4 (479 aa).

The active-site Proton acceptor is His-17. His-17 is a binding site for an anthocyanidin. The active-site Charge relay is Asp-127. UDP-alpha-D-glucose-binding residues include Thr-150, Ala-350, Gln-352, His-367, Trp-370, Asn-371, Ser-372, and Glu-375. Ala-390 contacts an anthocyanidin. Residues Glu-391 and Gln-392 each contribute to the UDP-alpha-D-glucose site.

The protein belongs to the UDP-glycosyltransferase family.

It carries out the reaction a flavonol + UDP-alpha-D-glucose = a flavonol 3-O-beta-D-glucoside + UDP + H(+). The catalysed reaction is a 7-O-hydroxy-flavonol + UDP-alpha-D-glucose = a flavonol 7-O-beta-D-glucoside + UDP + H(+). In terms of biological role, possesses quercetin 3-O-glucosyltransferase and 7-O-glucosyltransferase activities in vitro. Also active in vitro on benzoates and benzoate derivatives. The sequence is that of Flavonol 3-O-glucosyltransferase UGT71C4 from Arabidopsis thaliana (Mouse-ear cress).